Reading from the N-terminus, the 143-residue chain is Transcription antitermination protein NusB (143 aa).

Belongs to the NusB family.

Functionally, involved in transcription antitermination. Required for transcription of ribosomal RNA (rRNA) genes. Binds specifically to the boxA antiterminator sequence of the ribosomal RNA (rrn) operons. The polypeptide is Transcription antitermination protein NusB (Buchnera aphidicola subsp. Acyrthosiphon pisum (strain 5A)).